The following is a 146-amino-acid chain: MTHSTDLQWLLVRQNSKFLQKRNGIRLSSDPFNNNANWTKRHAGFLNTKAAVVKTKGDRILVTTKDGKAGNKPKSMYKKAVMDAGVEASVVSKAVAAVRPDLASIASRRARKMASTLEHMKKVRAARKERSSKITFQRKAVRPKRH.

Residues 123-146 form a disordered region; that stretch reads VRAARKERSSKITFQRKAVRPKRH.

The protein belongs to the eukaryotic ribosomal protein eL28 family.

This Trypanosoma cruzi protein is Large ribosomal subunit protein eL28.